The primary structure comprises 289 residues: ATP synthase gamma chain (289 aa).

Belongs to the ATPase gamma chain family. F-type ATPases have 2 components, CF(1) - the catalytic core - and CF(0) - the membrane proton channel. CF(1) has five subunits: alpha(3), beta(3), gamma(1), delta(1), epsilon(1). CF(0) has three main subunits: a, b and c.

It localises to the cell inner membrane. Its function is as follows. Produces ATP from ADP in the presence of a proton gradient across the membrane. The gamma chain is believed to be important in regulating ATPase activity and the flow of protons through the CF(0) complex. The polypeptide is ATP synthase gamma chain (Pasteurella multocida (strain Pm70)).